We begin with the raw amino-acid sequence, 1109 residues long: Carbamoyl phosphate synthase large chain (1109 aa).

The interval 1–402 (MPKRTDLKSV…ALQKALRSLE (402 aa)) is carboxyphosphate synthetic domain. The ATP site is built by Arg-129, Arg-169, Gly-175, Gly-176, Glu-208, Ile-210, Glu-215, Gly-241, Val-242, His-243, Gln-285, and Glu-299. Residues 133 to 328 (KGVVERCGAE…IAKIATKLSL (196 aa)) enclose the ATP-grasp 1 domain. Positions 285, 299, and 301 each coordinate Mg(2+). Positions 285, 299, and 301 each coordinate Mn(2+). The segment at 403-546 (QKGSQLDFSS…YHYSAYDEED (144 aa)) is oligomerization domain. Positions 547 to 950 (EVALHSKPSI…AFAKSQAGAN (404 aa)) are carbamoyl phosphate synthetic domain. An ATP-grasp 2 domain is found at 677-868 (SRVLDKAGLV…MAKAAALIGT (192 aa)). 10 residues coordinate ATP: Arg-713, Arg-752, Leu-754, Glu-759, Gly-784, Ile-785, His-786, Ser-787, Gln-827, and Glu-839. Mg(2+) contacts are provided by Gln-827, Glu-839, and Asn-841. The Mn(2+) site is built by Gln-827, Glu-839, and Asn-841. The MGS-like domain maps to 951–1096 (NALPTEGKVF…QEHAAALGES (146 aa)). The allosteric domain stretch occupies residues 951-1109 (NALPTEGKVF…AAAKADLQHA (159 aa)).

Belongs to the CarB family. Composed of two chains; the small (or glutamine) chain promotes the hydrolysis of glutamine to ammonia, which is used by the large (or ammonia) chain to synthesize carbamoyl phosphate. Tetramer of heterodimers (alpha,beta)4. It depends on Mg(2+) as a cofactor. Mn(2+) is required as a cofactor.

It catalyses the reaction hydrogencarbonate + L-glutamine + 2 ATP + H2O = carbamoyl phosphate + L-glutamate + 2 ADP + phosphate + 2 H(+). The catalysed reaction is hydrogencarbonate + NH4(+) + 2 ATP = carbamoyl phosphate + 2 ADP + phosphate + 2 H(+). The protein operates within amino-acid biosynthesis; L-arginine biosynthesis; carbamoyl phosphate from bicarbonate: step 1/1. It functions in the pathway pyrimidine metabolism; UMP biosynthesis via de novo pathway; (S)-dihydroorotate from bicarbonate: step 1/3. Large subunit of the glutamine-dependent carbamoyl phosphate synthetase (CPSase). CPSase catalyzes the formation of carbamoyl phosphate from the ammonia moiety of glutamine, carbonate, and phosphate donated by ATP, constituting the first step of 2 biosynthetic pathways, one leading to arginine and/or urea and the other to pyrimidine nucleotides. The large subunit (synthetase) binds the substrates ammonia (free or transferred from glutamine from the small subunit), hydrogencarbonate and ATP and carries out an ATP-coupled ligase reaction, activating hydrogencarbonate by forming carboxy phosphate which reacts with ammonia to form carbamoyl phosphate. The chain is Carbamoyl phosphate synthase large chain from Pseudarthrobacter chlorophenolicus (strain ATCC 700700 / DSM 12829 / CIP 107037 / JCM 12360 / KCTC 9906 / NCIMB 13794 / A6) (Arthrobacter chlorophenolicus).